The following is a 323-amino-acid chain: Calcium homeostasis modulator protein 2 (323 aa).

Topologically, residues 1 to 21 (MAALIAENFRFLSLFFKSKDV) are cytoplasmic. The interval 14–39 (LFFKSKDVMIFNGLVALGTVGSQELF) is central pore. The helical transmembrane segment at 22–43 (MIFNGLVALGTVGSQELFSVVA) threads the bilayer. The Extracellular portion of the chain corresponds to 44-52 (FHCPCSPAR). Cystine bridges form between Cys46/Cys130 and Cys48/Cys162. Residues 53–76 (NYLYGLTAIGVPALALFLIGVILN) form a helical membrane-spanning segment. The Cytoplasmic segment spans residues 77–101 (NHTWNLVAECQYRRAKNCSAAPNFL). A helical membrane pass occupies residues 102-132 (LLSSILGRAAVAPVTWSVISLLRGEAYVCAL). Residues 133–179 (SEFVDPSSLTAGDKGFPPAHATEVLARFPCGEGPANLSSFREEVSRR) lie on the Extracellular side of the membrane. Positions 145–152 (DKGFPPAH) are hemichannel docking. Residues 180–206 (LKYESQLFGWLLIGVVAILVFLTKCLK) traverse the membrane as a helical segment. Topologically, residues 207–323 (HYCSPLSYRQ…DNVEMALLTA (117 aa)) are cytoplasmic. Residues 214–251 (YRQEAYWAQYRTNEDQLFQRTAEVHSRVLAANNVRRFF) form an intersubunit interaction region.

It belongs to the CALHM family. As to quaternary structure, homo-undecamer. Two undecameric hemichannels can assemble in a head-to-head manner to form a gap junction. Neuron, astrocyte, and microglia.

Its subcellular location is the cell membrane. The catalysed reaction is ATP(in) = ATP(out). With respect to regulation, inhibited by divalent cations such as Co(2+) and Ni(2+). Pore-forming subunit of Ca(2+) homeostasis modulator channels. Mediates ATP release from astrocytes and ATP-induced Ca(2+) influx in microglia thus regulating neuronal ATP and Ca(2+) homeostasis, synaptic transmission and neuroinflammatory response. May form intercellular gap junctions. The gating mechanism remains unknown. The sequence is that of Calcium homeostasis modulator protein 2 from Mus musculus (Mouse).